A 267-amino-acid polypeptide reads, in one-letter code: Large ribosomal subunit protein uL4 (267 aa).

Belongs to the universal ribosomal protein uL4 family. Part of the 50S ribosomal subunit.

One of the primary rRNA binding proteins, this protein initially binds near the 5'-end of the 23S rRNA. It is important during the early stages of 50S assembly. It makes multiple contacts with different domains of the 23S rRNA in the assembled 50S subunit and ribosome. Functionally, forms part of the polypeptide exit tunnel. This is Large ribosomal subunit protein uL4 from Saccharolobus islandicus (strain L.S.2.15 / Lassen #1) (Sulfolobus islandicus).